We begin with the raw amino-acid sequence, 587 residues long: Kelch-like protein 3 (587 aa).

Residues 1 to 24 (MEGESVKPSPQPTAQAEDEEKNRR) are disordered. Residues 50–117 (CDVMIVAEDV…IYTAEIEVTE (68 aa)) enclose the BTB domain. Residues 152-254 (CLGIRAFADV…PRDYLVQTVE (103 aa)) form the BACK domain. A Phosphothreonine modification is found at threonine 295. Kelch repeat units lie at residues 302–347 (VMIV…FMAG), 348–394 (HVYA…VLND), 396–441 (LYAV…VVEG), 442–490 (KLYA…VLSG), 491–537 (QLYA…AVNG), and 539–585 (LYVV…VIHK). Phosphothreonine is present on threonine 375. Residues serine 376 and serine 433 each carry the phosphoserine modification.

The protein belongs to the KLHL3 family. Homodimer. Component of the BCR(KLHL3) E3 ubiquitin ligase complex, at least composed of CUL3 and KLHL3 and RBX1. Interacts with CLDN8. Phosphorylation at Ser-433 by PKA or PKC decreases the interaction with WNK1 and WNK4, leading to inhibit their degradation by the BCR(KLHL3) complex. Phosphorylated at Ser-433 by PKC in response to angiotensin II signaling, decreasing ability to promote degradation of WNK1 and WNK4, leading to activation of Na-Cl cotransporter SLC12A3/NCC. Phosphorylation at Ser-433 is increased by insulin. Dephosphorylated at Ser-433 by calcineurin PPP3CA, promoting degradation of WNK1 and WNK4. In terms of tissue distribution, present at high level in brain and kidney (at protein level). Weakly expressed in other tissues. In kidney, predominantly localizes to the distal convoluted tubule (DCT) and collecting duct, with apical localization in the DCT (at protein level).

The protein resides in the cytoplasm. Its subcellular location is the cytosol. It localises to the cytoskeleton. Its pathway is protein modification; protein ubiquitination. In terms of biological role, substrate-specific adapter of a BCR (BTB-CUL3-RBX1) E3 ubiquitin ligase complex that acts as a regulator of ion transport in the distal nephron. The BCR(KLHL3) complex acts by mediating ubiquitination and degradation of WNK1 and WNK4, two activators of Na-Cl cotransporter SLC12A3/NCC in distal convoluted tubule cells of kidney, thereby regulating NaCl reabsorption. The BCR(KLHL3) complex also mediates ubiquitination of CLDN8, a tight-junction protein required for paracellular chloride transport in the kidney, leading to its degradation. In Mus musculus (Mouse), this protein is Kelch-like protein 3.